The primary structure comprises 179 residues: MRVVFKLPDELRQELKNPLGELIEGNIPEPYVKAKNIIEGDDGVLITVGDVVTENIMRVGLNPNLAIYDHKTERREYKPRIIINGVLLTVKNPPGTITLPLLKSIKKAYSLILNGKSVHIVVNGEEDLATIPAVLYAPLGATVIYGQPKRGIVLIKVTNECKRRCAKIMRRMEVVRDGD.

Residues D50, V51, V52, D69, K71, and E126 each coordinate GTP.

This sequence belongs to the GTP-dependent DPCK family.

The catalysed reaction is 3'-dephospho-CoA + GTP = GDP + CoA + H(+). It functions in the pathway cofactor biosynthesis; coenzyme A biosynthesis. In terms of biological role, catalyzes the GTP-dependent phosphorylation of the 3'-hydroxyl group of dephosphocoenzyme A to form coenzyme A (CoA). This is GTP-dependent dephospho-CoA kinase from Pyrococcus horikoshii (strain ATCC 700860 / DSM 12428 / JCM 9974 / NBRC 100139 / OT-3).